The following is a 221-amino-acid chain: Glutathione peroxidase 6 (221 aa).

The N-terminal stretch at 1-19 (MAQKLWGSCLFSLFMAALA) is a signal peptide. Cys-73 is a catalytic residue.

This sequence belongs to the glutathione peroxidase family.

It localises to the secreted. The catalysed reaction is 2 glutathione + H2O2 = glutathione disulfide + 2 H2O. The protein is Glutathione peroxidase 6 (Gpx6) of Mus musculus (Mouse).